Here is a 27-residue protein sequence, read N- to C-terminus: U1-poneritoxin-Na3b (27 aa).

The protein belongs to the ponericin-G family. As to expression, expressed by the venom gland.

The protein resides in the secreted. Shows a broad spectrum of activity against both Gram-positive and Gram-negative bacteria. Also has antimicrobial activity against S.cerevisiae. Has insecticidal and non-hemolytic activity. The sequence is that of U1-poneritoxin-Na3b from Neoponera apicalis (Ant).